We begin with the raw amino-acid sequence, 332 residues long: Glycerol-3-phosphate dehydrogenase [NAD(P)+] (332 aa).

3 residues coordinate NADPH: Trp-13, Lys-34, and Lys-108. Lys-108, Gly-136, and Ser-138 together coordinate sn-glycerol 3-phosphate. Ala-140 lines the NADPH pocket. The sn-glycerol 3-phosphate site is built by Lys-191, Asp-244, Ser-254, Arg-255, and Asn-256. The active-site Proton acceptor is Lys-191. Arg-255 provides a ligand contact to NADPH. Residues Val-279 and Glu-281 each coordinate NADPH.

This sequence belongs to the NAD-dependent glycerol-3-phosphate dehydrogenase family.

The protein resides in the cytoplasm. The catalysed reaction is sn-glycerol 3-phosphate + NAD(+) = dihydroxyacetone phosphate + NADH + H(+). It catalyses the reaction sn-glycerol 3-phosphate + NADP(+) = dihydroxyacetone phosphate + NADPH + H(+). It participates in membrane lipid metabolism; glycerophospholipid metabolism. In terms of biological role, catalyzes the reduction of the glycolytic intermediate dihydroxyacetone phosphate (DHAP) to sn-glycerol 3-phosphate (G3P), the key precursor for phospholipid synthesis. This Francisella philomiragia subsp. philomiragia (strain ATCC 25017 / CCUG 19701 / FSC 153 / O#319-036) protein is Glycerol-3-phosphate dehydrogenase [NAD(P)+].